The chain runs to 536 residues: Phosphoenolpyruvate carboxykinase (ATP) (536 aa).

The substrate site is built by Arg-61, Tyr-195, and Lys-201. Residues Lys-201, His-220, and 236–244 (GLSGTGKTT) each bind ATP. The Mn(2+) site is built by Lys-201 and His-220. A Mn(2+)-binding site is contributed by Asp-257. The ATP site is built by Glu-285, Arg-322, and Thr-447. Arg-322 contacts substrate.

Belongs to the phosphoenolpyruvate carboxykinase (ATP) family. It depends on Mn(2+) as a cofactor.

The protein localises to the cytoplasm. The enzyme catalyses oxaloacetate + ATP = phosphoenolpyruvate + ADP + CO2. Its pathway is carbohydrate biosynthesis; gluconeogenesis. Functionally, involved in the gluconeogenesis. Catalyzes the conversion of oxaloacetate (OAA) to phosphoenolpyruvate (PEP) through direct phosphoryl transfer between the nucleoside triphosphate and OAA. This chain is Phosphoenolpyruvate carboxykinase (ATP), found in Rhizobium etli (strain CIAT 652).